The sequence spans 595 residues: Glutamyl-tRNA(Gln) amidotransferase subunit B, mitochondrial (595 aa).

A mitochondrion-targeting transit peptide spans 1–114 (MPRLWYSRYL…RAPTSTVAEP (114 aa)). Residues 59 to 78 (KEEAKRSKSQSRNGRGKKQV) form a disordered region.

This sequence belongs to the GatB/GatE family. GatB subfamily. In terms of assembly, subunit of the heterotrimeric GatCAB amidotransferase (AdT) complex, composed of A, B and C subunits.

It localises to the mitochondrion. It catalyses the reaction L-glutamyl-tRNA(Gln) + L-glutamine + ATP + H2O = L-glutaminyl-tRNA(Gln) + L-glutamate + ADP + phosphate + H(+). Functionally, allows the formation of correctly charged Gln-tRNA(Gln) through the transamidation of misacylated Glu-tRNA(Gln) in the mitochondria. The reaction takes place in the presence of glutamine and ATP through an activated gamma-phospho-Glu-tRNA(Gln). This chain is Glutamyl-tRNA(Gln) amidotransferase subunit B, mitochondrial, found in Talaromyces stipitatus (strain ATCC 10500 / CBS 375.48 / QM 6759 / NRRL 1006) (Penicillium stipitatum).